The chain runs to 445 residues: N-succinylarginine dihydrolase (445 aa).

Residues 19 to 28 (AGLSFGNVAS), Asn-110, and 137 to 138 (HR) each bind substrate. Glu-174 is an active-site residue. Arg-214 contributes to the substrate binding site. His-250 is a catalytic residue. Positions 252 and 363 each coordinate substrate. Cys-369 acts as the Nucleophile in catalysis.

This sequence belongs to the succinylarginine dihydrolase family. As to quaternary structure, homodimer.

The enzyme catalyses N(2)-succinyl-L-arginine + 2 H2O + 2 H(+) = N(2)-succinyl-L-ornithine + 2 NH4(+) + CO2. It participates in amino-acid degradation; L-arginine degradation via AST pathway; L-glutamate and succinate from L-arginine: step 2/5. Its function is as follows. Catalyzes the hydrolysis of N(2)-succinylarginine into N(2)-succinylornithine, ammonia and CO(2). The sequence is that of N-succinylarginine dihydrolase from Shewanella piezotolerans (strain WP3 / JCM 13877).